The chain runs to 414 residues: Imidazolonepropionase (414 aa).

Fe(3+) is bound by residues histidine 77 and histidine 79. Residues histidine 77 and histidine 79 each contribute to the Zn(2+) site. Residues arginine 86, tyrosine 149, and histidine 184 each contribute to the 4-imidazolone-5-propanoate site. Tyrosine 149 is an N-formimidoyl-L-glutamate binding site. Residue histidine 249 coordinates Fe(3+). Residue histidine 249 coordinates Zn(2+). Residue glutamate 252 participates in 4-imidazolone-5-propanoate binding. Aspartate 323 contributes to the Fe(3+) binding site. Position 323 (aspartate 323) interacts with Zn(2+). 2 residues coordinate N-formimidoyl-L-glutamate: asparagine 325 and glycine 327. Serine 328 contributes to the 4-imidazolone-5-propanoate binding site.

Belongs to the metallo-dependent hydrolases superfamily. HutI family. It depends on Zn(2+) as a cofactor. Fe(3+) serves as cofactor.

The protein localises to the cytoplasm. The catalysed reaction is 4-imidazolone-5-propanoate + H2O = N-formimidoyl-L-glutamate. It participates in amino-acid degradation; L-histidine degradation into L-glutamate; N-formimidoyl-L-glutamate from L-histidine: step 3/3. In terms of biological role, catalyzes the hydrolytic cleavage of the carbon-nitrogen bond in imidazolone-5-propanoate to yield N-formimidoyl-L-glutamate. It is the third step in the universal histidine degradation pathway. The chain is Imidazolonepropionase from Phocaeicola vulgatus (strain ATCC 8482 / DSM 1447 / JCM 5826 / CCUG 4940 / NBRC 14291 / NCTC 11154) (Bacteroides vulgatus).